A 106-amino-acid polypeptide reads, in one-letter code: Iron-sulfur cluster assembly protein CyaY (106 aa).

The protein belongs to the frataxin family.

Involved in iron-sulfur (Fe-S) cluster assembly. May act as a regulator of Fe-S biogenesis. This Photorhabdus laumondii subsp. laumondii (strain DSM 15139 / CIP 105565 / TT01) (Photorhabdus luminescens subsp. laumondii) protein is Iron-sulfur cluster assembly protein CyaY.